A 196-amino-acid polypeptide reads, in one-letter code: MIIFTATLIIILAYFLGSISGSILICKTLHFKDPRQHGSKNPGTTNILRIINYKIAIFVLLFDSLKGAVPIWLGTYFHIDPIYLYIIAISACIGHIYPIYFQFYGGKGVATAFGALTAISINFFIIIIITWILTVYLFRYASLGSIVTFIVITFYVWYIQYHHFEYIILLSLIILSQHKNNIKRLWNHQEKHIWNR.

5 helical membrane-spanning segments follow: residues 1 to 21, 55 to 75, 81 to 101, 118 to 138, and 140 to 160; these read MIIFTATLIIILAYFLGSISG, IAIFVLLFDSLKGAVPIWLGT, PIYLYIIAISACIGHIYPIYF, AISINFFIIIIITWILTVYLF, and YASLGSIVTFIVITFYVWYIQ.

The protein belongs to the PlsY family. Probably interacts with PlsX.

It localises to the cell inner membrane. It catalyses the reaction an acyl phosphate + sn-glycerol 3-phosphate = a 1-acyl-sn-glycero-3-phosphate + phosphate. It participates in lipid metabolism; phospholipid metabolism. Functionally, catalyzes the transfer of an acyl group from acyl-phosphate (acyl-PO(4)) to glycerol-3-phosphate (G3P) to form lysophosphatidic acid (LPA). This enzyme utilizes acyl-phosphate as fatty acyl donor, but not acyl-CoA or acyl-ACP. The sequence is that of Glycerol-3-phosphate acyltransferase from Blochmanniella floridana.